Reading from the N-terminus, the 447-residue chain is Phosphoglucosamine mutase (447 aa).

Ser100 serves as the catalytic Phosphoserine intermediate. Mg(2+)-binding residues include Ser100, Asp239, Asp241, and Asp243. Phosphoserine is present on Ser100.

Belongs to the phosphohexose mutase family. Mg(2+) is required as a cofactor. Activated by phosphorylation.

The enzyme catalyses alpha-D-glucosamine 1-phosphate = D-glucosamine 6-phosphate. Its function is as follows. Catalyzes the conversion of glucosamine-6-phosphate to glucosamine-1-phosphate. This chain is Phosphoglucosamine mutase, found in Thermoanaerobacter sp. (strain X514).